The primary structure comprises 117 residues: Putative membrane protein insertion efficiency factor (117 aa).

The protein belongs to the UPF0161 family.

It localises to the cell inner membrane. Functionally, could be involved in insertion of integral membrane proteins into the membrane. In Nitrobacter winogradskyi (strain ATCC 25391 / DSM 10237 / CIP 104748 / NCIMB 11846 / Nb-255), this protein is Putative membrane protein insertion efficiency factor.